The chain runs to 193 residues: Ion-translocating oxidoreductase complex subunit B (193 aa).

Residues 1–26 (MSTMLIAVILLTLLALFFGVLLGFAA) are hydrophobic. The 4Fe-4S domain maps to 32-90 (EGNPIVDELEAILPQTQCGQCGYPGCRPYAEAIANGDKVNKCPPGGTATMEKLASLMGV). Cysteine 49, cysteine 52, cysteine 57, cysteine 73, cysteine 114, cysteine 117, cysteine 120, cysteine 124, cysteine 144, cysteine 147, cysteine 150, and cysteine 154 together coordinate [4Fe-4S] cluster. 2 4Fe-4S ferredoxin-type domains span residues 105–134 (KVAYIREDECIGCTKCIQACPVDAIIGAGK) and 136–164 (MHTVLTADCTGCDLCVEPCPVDCIDMVPV).

The protein belongs to the 4Fe4S bacterial-type ferredoxin family. RnfB subfamily. In terms of assembly, the complex is composed of six subunits: RnfA, RnfB, RnfC, RnfD, RnfE and RnfG. Requires [4Fe-4S] cluster as cofactor.

It localises to the cell inner membrane. Its function is as follows. Part of a membrane-bound complex that couples electron transfer with translocation of ions across the membrane. The chain is Ion-translocating oxidoreductase complex subunit B from Shewanella oneidensis (strain ATCC 700550 / JCM 31522 / CIP 106686 / LMG 19005 / NCIMB 14063 / MR-1).